A 682-amino-acid polypeptide reads, in one-letter code: DNA ligase (682 aa).

NAD(+) is bound by residues 38–42, 87–88, and Glu-119; these read DAEYD and SI. Lys-121 acts as the N6-AMP-lysine intermediate in catalysis. 4 residues coordinate NAD(+): Arg-142, Glu-181, Lys-298, and Lys-322. Residues Cys-416, Cys-419, Cys-434, and Cys-439 each coordinate Zn(2+). Positions 601 to 682 constitute a BRCT domain; the sequence is GHEMPLAGKT…LLSLLEPGER (82 aa).

This sequence belongs to the NAD-dependent DNA ligase family. LigA subfamily. The cofactor is Mg(2+). It depends on Mn(2+) as a cofactor.

The enzyme catalyses NAD(+) + (deoxyribonucleotide)n-3'-hydroxyl + 5'-phospho-(deoxyribonucleotide)m = (deoxyribonucleotide)n+m + AMP + beta-nicotinamide D-nucleotide.. Its function is as follows. DNA ligase that catalyzes the formation of phosphodiester linkages between 5'-phosphoryl and 3'-hydroxyl groups in double-stranded DNA using NAD as a coenzyme and as the energy source for the reaction. It is essential for DNA replication and repair of damaged DNA. The chain is DNA ligase from Desulfosudis oleivorans (strain DSM 6200 / JCM 39069 / Hxd3) (Desulfococcus oleovorans).